The chain runs to 809 residues: Leucine--tRNA ligase (809 aa).

The 'HIGH' region signature appears at 40 to 50 (PYPSGRIHMGH). Positions 579–583 (KMSKS) match the 'KMSKS' region motif. Lysine 582 provides a ligand contact to ATP.

Belongs to the class-I aminoacyl-tRNA synthetase family.

It is found in the cytoplasm. It catalyses the reaction tRNA(Leu) + L-leucine + ATP = L-leucyl-tRNA(Leu) + AMP + diphosphate. The sequence is that of Leucine--tRNA ligase from Campylobacter lari (strain RM2100 / D67 / ATCC BAA-1060).